The following is a 413-amino-acid chain: Na(+)-translocating NADH-quinone reductase subunit B (413 aa).

3 helical membrane passes run 55–75, 128–148, and 163–183; these read IMIM…YNAG, FLPI…LFCM, and ILFA…LGIT. Thr235 is subject to FMN phosphoryl threonine. 5 helical membrane-spanning segments follow: residues 267–287, 296–316, 324–344, 357–377, and 380–400; these read IPGS…AMIV, IIAG…VIGS, MPWH…FMAT, WWYG…NPAY, and GMML…HVVI.

The protein belongs to the NqrB/RnfD family. Composed of six subunits; NqrA, NqrB, NqrC, NqrD, NqrE and NqrF. The cofactor is FMN.

It is found in the cell inner membrane. The enzyme catalyses a ubiquinone + n Na(+)(in) + NADH + H(+) = a ubiquinol + n Na(+)(out) + NAD(+). Functionally, NQR complex catalyzes the reduction of ubiquinone-1 to ubiquinol by two successive reactions, coupled with the transport of Na(+) ions from the cytoplasm to the periplasm. NqrA to NqrE are probably involved in the second step, the conversion of ubisemiquinone to ubiquinol. The sequence is that of Na(+)-translocating NADH-quinone reductase subunit B from Vibrio campbellii (strain ATCC BAA-1116).